The sequence spans 572 residues: Urease subunit alpha (572 aa).

The 437-residue stretch at 136–572 folds into the Urease domain; it reads GGIDTHIHFI…VPLGQRYFLF (437 aa). Residues His141, His143, and Lys224 each contribute to the Ni(2+) site. Lys224 carries the post-translational modification N6-carboxylysine. Position 226 (His226) interacts with substrate. Ni(2+)-binding residues include His253 and His279. The Proton donor role is filled by His327. Ni(2+) is bound at residue Asp367.

The protein belongs to the metallo-dependent hydrolases superfamily. Urease alpha subunit family. As to quaternary structure, heterotrimer of UreA (gamma), UreB (beta) and UreC (alpha) subunits. Three heterotrimers associate to form the active enzyme. Ni cation serves as cofactor. In terms of processing, carboxylation allows a single lysine to coordinate two nickel ions.

It is found in the cytoplasm. It carries out the reaction urea + 2 H2O + H(+) = hydrogencarbonate + 2 NH4(+). It functions in the pathway nitrogen metabolism; urea degradation; CO(2) and NH(3) from urea (urease route): step 1/1. This Haemophilus influenzae (strain ATCC 51907 / DSM 11121 / KW20 / Rd) protein is Urease subunit alpha.